The primary structure comprises 220 residues: Ribosomal RNA large subunit methyltransferase E (220 aa).

Residues G60, W62, D92, D108, and D133 each contribute to the S-adenosyl-L-methionine site. The active-site Proton acceptor is the K173.

Belongs to the class I-like SAM-binding methyltransferase superfamily. RNA methyltransferase RlmE family.

It is found in the cytoplasm. The enzyme catalyses uridine(2552) in 23S rRNA + S-adenosyl-L-methionine = 2'-O-methyluridine(2552) in 23S rRNA + S-adenosyl-L-homocysteine + H(+). In terms of biological role, specifically methylates the uridine in position 2552 of 23S rRNA at the 2'-O position of the ribose in the fully assembled 50S ribosomal subunit. In Burkholderia thailandensis (strain ATCC 700388 / DSM 13276 / CCUG 48851 / CIP 106301 / E264), this protein is Ribosomal RNA large subunit methyltransferase E.